A 239-amino-acid polypeptide reads, in one-letter code: Lactate utilization protein A (239 aa).

The protein belongs to the LutA/YkgE family.

Its function is as follows. Is involved in L-lactate degradation and allows cells to grow with lactate as the sole carbon source. This is Lactate utilization protein A from Shouchella clausii (strain KSM-K16) (Alkalihalobacillus clausii).